The chain runs to 147 residues: MSGSKSPKGEFAGRKLLLKRKATRWQHYKYVNRELGLKVKADPLGGAPMGRGIVVEKVGLEAKQPNSAIRKCVKVQLIKNGRVVTAFAPGNHAINFIDEHDEVVIEGIGGPSGQAKGDIPGVRYKVLMVGKNSIRELVRGRQEKVKR.

This sequence belongs to the universal ribosomal protein uS12 family. In terms of assembly, part of the 30S ribosomal subunit.

In terms of biological role, with S4 and S5 plays an important role in translational accuracy. Located at the interface of the 30S and 50S subunits. The sequence is that of Small ribosomal subunit protein uS12 from Methanococcus vannielii (strain ATCC 35089 / DSM 1224 / JCM 13029 / OCM 148 / SB).